The following is a 372-amino-acid chain: MKIFFLFIILLGIIQLSNSSSCNIDIAGDSFDLTPLKKIDGYHKVISDYGDIVYFNFCNTTIDTPCGNSALAYFFDGSTGECHSLGVQEFYSLNSYEEKKTLLINIRGGDIAYDSMVKMLEMFIAFTCDESDDTSEPSLINTMEYGYASVIWTTKYSCAIKTPNVEKKLITNENQNNNNFQFENNEILNEAQSNAFEISNKNEDLNNNNNNNNNNNNNNNNNNNNNNNNNKINSGISFLQRLNQMSQTINNRNEYQQFEEQQNEMQENRAEIVQFNDDIKLIDLEQKQPFYNDDQLMSQTNDDIEFEQDQTNFDTVNDDEIANQINDFMNNFEKTQNLDGDYINQEKIIPNIIMEDTKPNDLTQNFEIENEF.

The signal sequence occupies residues 1–19; the sequence is MKIFFLFIILLGIIQLSNS. The N-linked (GlcNAc...) asparagine glycan is linked to N18. One can recognise an MRH domain in the interval 20–160; the sequence is SSCNIDIAGD…IWTTKYSCAI (141 aa). Cysteines 22 and 58 form a disulfide. N-linked (GlcNAc...) asparagine glycosylation occurs at N59. A disulfide bridge links C128 with C158. A coiled-coil region spans residues 185–282; that stretch reads NEILNEAQSN…VQFNDDIKLI (98 aa). The interval 201 to 233 is disordered; it reads KNEDLNNNNNNNNNNNNNNNNNNNNNNNNNKIN. Residues 206–230 are compositionally biased toward low complexity; the sequence is NNNNNNNNNNNNNNNNNNNNNNNNN.

It localises to the secreted. This is an uncharacterized protein from Dictyostelium discoideum (Social amoeba).